Consider the following 121-residue polypeptide: Aspartate 1-decarboxylase (121 aa).

Ser-25 (schiff-base intermediate with substrate; via pyruvic acid) is an active-site residue. Pyruvic acid (Ser) is present on Ser-25. Thr-57 contacts substrate. The active-site Proton donor is the Tyr-58. Substrate is bound at residue Gly-73–Ala-75.

This sequence belongs to the PanD family. As to quaternary structure, heterooctamer of four alpha and four beta subunits. It depends on pyruvate as a cofactor. Is synthesized initially as an inactive proenzyme, which is activated by self-cleavage at a specific serine bond to produce a beta-subunit with a hydroxyl group at its C-terminus and an alpha-subunit with a pyruvoyl group at its N-terminus.

The protein resides in the cytoplasm. The catalysed reaction is L-aspartate + H(+) = beta-alanine + CO2. The protein operates within cofactor biosynthesis; (R)-pantothenate biosynthesis; beta-alanine from L-aspartate: step 1/1. Functionally, catalyzes the pyruvoyl-dependent decarboxylation of aspartate to produce beta-alanine. This chain is Aspartate 1-decarboxylase, found in Sulfurimonas denitrificans (strain ATCC 33889 / DSM 1251) (Thiomicrospira denitrificans (strain ATCC 33889 / DSM 1251)).